The sequence spans 456 residues: Adenylosuccinate lyase (456 aa).

N(6)-(1,2-dicarboxyethyl)-AMP-binding positions include 15-16 (RY), 90-92 (NHD), and 122-123 (TS). The active-site Proton donor/acceptor is the His171. Gln248 contributes to the N(6)-(1,2-dicarboxyethyl)-AMP binding site. Ser296 (proton donor/acceptor) is an active-site residue. N(6)-(1,2-dicarboxyethyl)-AMP-binding positions include Ser297, 302 to 304 (KVN), Asn310, Arg336, and 341 to 345 (STVLR).

Belongs to the lyase 1 family. Adenylosuccinate lyase subfamily. In terms of assembly, homotetramer. Residues from neighboring subunits contribute catalytic and substrate-binding residues to each active site.

It catalyses the reaction N(6)-(1,2-dicarboxyethyl)-AMP = fumarate + AMP. It carries out the reaction (2S)-2-[5-amino-1-(5-phospho-beta-D-ribosyl)imidazole-4-carboxamido]succinate = 5-amino-1-(5-phospho-beta-D-ribosyl)imidazole-4-carboxamide + fumarate. It participates in purine metabolism; AMP biosynthesis via de novo pathway; AMP from IMP: step 2/2. The protein operates within purine metabolism; IMP biosynthesis via de novo pathway; 5-amino-1-(5-phospho-D-ribosyl)imidazole-4-carboxamide from 5-amino-1-(5-phospho-D-ribosyl)imidazole-4-carboxylate: step 2/2. In terms of biological role, catalyzes two reactions in de novo purine nucleotide biosynthesis. Catalyzes the breakdown of 5-aminoimidazole- (N-succinylocarboxamide) ribotide (SAICAR or 2-[5-amino-1-(5-phospho-beta-D-ribosyl)imidazole-4-carboxamido]succinate) to 5-aminoimidazole-4-carboxamide ribotide (AICAR or 5-amino-1-(5-phospho-beta-D-ribosyl)imidazole-4-carboxamide) and fumarate, and of adenylosuccinate (ADS or N(6)-(1,2-dicarboxyethyl)-AMP) to adenosine monophosphate (AMP) and fumarate. The polypeptide is Adenylosuccinate lyase (purB) (Pseudomonas aeruginosa (strain ATCC 15692 / DSM 22644 / CIP 104116 / JCM 14847 / LMG 12228 / 1C / PRS 101 / PAO1)).